The primary structure comprises 866 residues: Probable beta-glucosidase F (866 aa).

The N-terminal stretch at 1 to 20 is a signal peptide; that stretch reads MAAFPAYLALLSYLVPGALS. N65, N73, and N257 each carry an N-linked (GlcNAc...) asparagine glycan. Residue D285 is part of the active site. N-linked (GlcNAc...) asparagine glycosylation is found at N328, N360, N395, N421, N474, N659, N664, and N724. Residues 725–748 are disordered; that stretch reads SSKTYPYPDGYTTEPKPAPRAGGA.

Belongs to the glycosyl hydrolase 3 family.

The protein resides in the secreted. It carries out the reaction Hydrolysis of terminal, non-reducing beta-D-glucosyl residues with release of beta-D-glucose.. The protein operates within glycan metabolism; cellulose degradation. Its function is as follows. Beta-glucosidases are one of a number of cellulolytic enzymes involved in the degradation of cellulosic biomass. Catalyzes the last step releasing glucose from the inhibitory cellobiose. In Aspergillus flavus (strain ATCC 200026 / FGSC A1120 / IAM 13836 / NRRL 3357 / JCM 12722 / SRRC 167), this protein is Probable beta-glucosidase F (bglF).